The primary structure comprises 333 residues: MITFEGVEKVYESGGQKVHALNGIDLHVDKGEIYGVIGFSGAGKSTLIRCVNFLEKPTAGKVFVGGRDLMSLSKAEIRTVKRKIGMVFQHFNLLNSKTIFANVAEPLALVKTPKADIKKKVTELLRFVGLEDKARDYPDQLSGGQKQRVGIARALATNPEVLLCDEATSALDPQTTGDILKLLKRVNEQYNITILLITHEMNVAKEICDKVAVIEKGRIIESGSVFDVFSAPETETAKSFVKSAIDHEIPESIQKLNLKHLYQLQFVGESSGKPFLSQVSKRYDVEVNILHGTITELQGIPFGSMTVELQGEDGEIGRALEYIRRENIRIREV.

The ABC transporter domain maps to 2–241 (ITFEGVEKVY…PETETAKSFV (240 aa)). 38 to 45 (GFSGAGKS) is a binding site for ATP.

This sequence belongs to the ABC transporter superfamily. Methionine importer (TC 3.A.1.24) family. The complex is composed of two ATP-binding proteins (MetN), two transmembrane proteins (MetI) and a solute-binding protein (MetQ).

The protein resides in the cell membrane. It catalyses the reaction L-methionine(out) + ATP + H2O = L-methionine(in) + ADP + phosphate + H(+). It carries out the reaction D-methionine(out) + ATP + H2O = D-methionine(in) + ADP + phosphate + H(+). Functionally, part of the ABC transporter complex MetNIQ involved in methionine import. Responsible for energy coupling to the transport system. This chain is Methionine import ATP-binding protein MetN 1, found in Bacillus licheniformis (strain ATCC 14580 / DSM 13 / JCM 2505 / CCUG 7422 / NBRC 12200 / NCIMB 9375 / NCTC 10341 / NRRL NRS-1264 / Gibson 46).